A 428-amino-acid polypeptide reads, in one-letter code: Tyrosine--tRNA ligase (428 aa).

Tyr-36 lines the L-tyrosine pocket. The 'HIGH' region signature appears at 41–50 (PTARSLHIGS). L-tyrosine-binding residues include Tyr-169 and Gln-173. Residues 229–233 (KMGKT) carry the 'KMSKS' region motif. Lys-232 contributes to the ATP binding site. The S4 RNA-binding domain occupies 361-427 (IPAYEIMHEC…GKKKYMIIKV (67 aa)).

This sequence belongs to the class-I aminoacyl-tRNA synthetase family. TyrS type 1 subfamily. Homodimer.

The protein localises to the cytoplasm. The enzyme catalyses tRNA(Tyr) + L-tyrosine + ATP = L-tyrosyl-tRNA(Tyr) + AMP + diphosphate + H(+). Its function is as follows. Catalyzes the attachment of tyrosine to tRNA(Tyr) in a two-step reaction: tyrosine is first activated by ATP to form Tyr-AMP and then transferred to the acceptor end of tRNA(Tyr). In Syntrophus aciditrophicus (strain SB), this protein is Tyrosine--tRNA ligase.